The chain runs to 190 residues: Lipid A acyltransferase PagP (190 aa).

An N-terminal signal peptide occupies residues 1–18 (MKRLISCLTIICALNASA). Catalysis depends on residues H60, D103, and S104.

It belongs to the lipid A palmitoyltransferase family. Homodimer.

The protein resides in the cell outer membrane. The catalysed reaction is a lipid A + a 1,2-diacyl-sn-glycero-3-phosphocholine = a hepta-acyl lipid A + a 2-acyl-sn-glycero-3-phosphocholine. It carries out the reaction a lipid IVA + a 1,2-diacyl-sn-glycero-3-phosphocholine = a lipid IVB + a 2-acyl-sn-glycero-3-phosphocholine. The enzyme catalyses a lipid IIA + a 1,2-diacyl-sn-glycero-3-phosphocholine = a lipid IIB + a 2-acyl-sn-glycero-3-phosphocholine. Transfers a fatty acid residue from the sn-1 position of a phospholipid to the N-linked hydroxyfatty acid chain on the proximal unit of lipid A or its precursors. This is Lipid A acyltransferase PagP from Legionella pneumophila (strain Corby).